A 221-amino-acid chain; its full sequence is Late embryogenesis abundant protein, group 3 (221 aa).

The tract at residues 1–221 (MASHQDKASY…KDSSTITRDH (221 aa)) is disordered. The segment covering 33-42 (TAQHAKDRAA) has biased composition (basic and acidic residues). Positions 43–52 (DAAGHAAGKG) are enriched in low complexity. Basic and acidic residues-rich tracts occupy residues 53-63 (QDAKEATKQKA) and 72-147 (KKTD…KQKA). The span at 212–221 (KDSSTITRDH) shows a compositional bias: polar residues.

The protein belongs to the LEA type 4 family.

The sequence is that of Late embryogenesis abundant protein, group 3 (MGL3) from Zea mays (Maize).